We begin with the raw amino-acid sequence, 58 residues long: UPF0337 protein SAV_738 (58 aa).

The tract at residues 1–58 (MAADEKAQANGEQAKGKVKKVVGGAAGNESLKGKGHAEESKGDLRAAKEKAKDAIKRK) is disordered. Residues 31 to 58 (LKGKGHAEESKGDLRAAKEKAKDAIKRK) show a composition bias toward basic and acidic residues.

It belongs to the UPF0337 (CsbD) family.

The sequence is that of UPF0337 protein SAV_738 from Streptomyces avermitilis (strain ATCC 31267 / DSM 46492 / JCM 5070 / NBRC 14893 / NCIMB 12804 / NRRL 8165 / MA-4680).